The following is a 474-amino-acid chain: MATSWGSILQDEKQLEELAQQAIDRALAEGVLLRSAKNPSSSDVVTYAPFTLFPSPVPSTLLEQAYAVQMDFNILVDAVSQNSAFLEQTLSSTIKKDEYTARLFDIYKQVLKEGIAQTVFLGLNRSDYMFQCSADGSKALKQIEINTISASFGGLASRTPAVHRHVLNVLNKTNEASKILSNNPSKGLALGIAKAWELYGSANAVVLLIAQEKERNIFDQRAIENELLDRKIHVIRRRFEDVSERGSLDQNRRLFMEDQEVAVVYFRDGYMPSQYNAQNWEARLLLERSCAAKCPDIATQLAGTKKVQQELSRVGLLEALLPGQPEAVARLRATFAGLYSLDMGEEGDQAVAEALAAPSHFVLKPQREGGGNNFYGEEMVHALEQLKDSEERASYILMEKIEPEPFRNCLLRPGSPAQVVQCISELGIFGVYVRQGTTLVMNKHVGHLLRTKAIEHADGGVAAGVAVLDNPYPV.

Residue Ala2 is modified to N-acetylalanine. Arg125 serves as a coordination point for substrate. Glu144 contributes to the ATP binding site. Mg(2+) is bound by residues Glu144 and Asn146. Residues Ile148–Ser151, Glu214–Asn216, Gln220, and Arg267–Tyr270 each bind substrate. Residues Lys305, Lys364–Asn373, Tyr375, and Met398–Ile401 contribute to the ATP site. Glu368 serves as a coordination point for Mg(2+). Ser415 is subject to Phosphoserine. Glu425 contacts ATP. Arg450 lines the substrate pocket. ATP contacts are provided by Lys452 and Asp458. Val461–Ala462 is a binding site for substrate.

This sequence belongs to the eukaryotic GSH synthase family. As to quaternary structure, homodimer. The cofactor is Mg(2+).

The catalysed reaction is gamma-L-glutamyl-L-cysteine + glycine + ATP = glutathione + ADP + phosphate + H(+). It carries out the reaction gamma-L-glutamyl-(2S)-2-aminobutanoate + glycine + ATP = ophthalmate + ADP + phosphate + H(+). Its pathway is sulfur metabolism; glutathione biosynthesis; glutathione from L-cysteine and L-glutamate: step 2/2. Its function is as follows. Catalyzes the production of glutathione from gamma-glutamylcysteine and glycine in an ATP-dependent manner. Glutathione (gamma-glutamylcysteinylglycine, GSH) is the most abundant intracellular thiol in living aerobic cells and is required for numerous processes including the protection of cells against oxidative damage, amino acid transport, the detoxification of foreign compounds, the maintenance of protein sulfhydryl groups in a reduced state and acts as a cofactor for a number of enzymes. Participates in ophthalmate biosynthesis in hepatocytes. The polypeptide is Glutathione synthetase (Rattus norvegicus (Rat)).